A 179-amino-acid chain; its full sequence is UPF0227 protein Shew185_2404 (179 aa).

Belongs to the UPF0227 family.

The polypeptide is UPF0227 protein Shew185_2404 (Shewanella baltica (strain OS185)).